The following is a 184-amino-acid chain: Protein Syd (184 aa).

This sequence belongs to the Syd family.

Its subcellular location is the cell inner membrane. Its function is as follows. Interacts with the SecY protein in vivo. May bind preferentially to an uncomplexed state of SecY, thus functioning either as a chelating agent for excess SecY in the cell or as a regulatory factor that negatively controls the translocase function. This Psychromonas ingrahamii (strain DSM 17664 / CCUG 51855 / 37) protein is Protein Syd.